The following is a 238-amino-acid chain: Opacity protein opA66 (238 aa).

Residue Ala1 is a signal peptide. Disordered regions lie at residues 88–109 and 162–183; these read NLQR…QENG and GARG…AHQE. The segment covering 168–183 has biased composition (polar residues); that stretch reads PTVSSPYKNTQDAHQE.

This sequence belongs to the opacity porin family.

It localises to the cell outer membrane. Implicated in a number of adherence functions. OPA proteins are implicated in pathogenesis and are subject to phase variation. The protein is Opacity protein opA66 of Neisseria gonorrhoeae.